The chain runs to 656 residues: ATP-dependent zinc metalloprotease FtsH (656 aa).

The Cytoplasmic segment spans residues 1 to 45 (MAIFARRIGLNQHSAYGSRQRVIVMKNFGKKALIKQQSPKRVAWT). A helical transmembrane segment spans residues 46–66 (GALAASLIMLPTMFGGNPVLA). The Lumenal segment spans residues 67–147 (QKAERESLSY…EISSANSRAA (81 aa)). Residues 148–168 (VGLLINLMWILPLVALMLLFL) traverse the membrane as a helical segment. At 169 to 656 (RRSTNASSQA…DEQLSMVNSQ (488 aa)) the chain is on the cytoplasmic side. An ATP-binding site is contributed by 239 to 246 (GPPGTGKT). Histidine 460 is a binding site for Zn(2+). Residue glutamate 461 is part of the active site. 2 residues coordinate Zn(2+): histidine 464 and aspartate 538.

This sequence in the central section; belongs to the AAA ATPase family. In the C-terminal section; belongs to the peptidase M41 family. As to quaternary structure, homohexamer. It depends on Zn(2+) as a cofactor.

It is found in the cellular thylakoid membrane. Functionally, acts as a processive, ATP-dependent zinc metallopeptidase for both cytoplasmic and membrane proteins. Plays a role in the quality control of integral membrane proteins. In Nostoc sp. (strain PCC 7120 / SAG 25.82 / UTEX 2576), this protein is ATP-dependent zinc metalloprotease FtsH.